The following is a 76-amino-acid chain: uncharacterized protein (76 aa).

Transmembrane regions (helical) follow at residues 16 to 33 (FAFT…GAVL) and 45 to 61 (TMFL…FFCA).

The protein localises to the cell membrane. This is an uncharacterized protein from Bacillus subtilis (strain 168).